The primary structure comprises 149 residues: Nascent polypeptide-associated complex subunit beta-2 (149 aa).

Residues 38-103 enclose the NAC-A/B domain; sequence DKDNTKLQAE…PKENTLNGLY (66 aa).

The protein belongs to the NAC-beta family. Part of the nascent polypeptide-associated complex (NAC), consisting of EGD2 and either EGD1 or BTT1. NAC associates with ribosomes via EGD1 or BTT1.

Its subcellular location is the cytoplasm. The protein localises to the nucleus. Its function is as follows. Acts as a component of the nascent polypeptide-associated complex (NAC), which promotes mitochondrial protein import by enhancing productive ribosome interactions with the outer mitochondrial membrane. Also blocks the inappropriate interaction of ribosomes translating non-secretory nascent polypeptides with translocation sites in the membrane of the endoplasmic reticulum. BTT1 may act as a transcription factor that exert a negative effect on the expression of several genes that are transcribed by RNA polymerase II. The sequence is that of Nascent polypeptide-associated complex subunit beta-2 (BTT1) from Saccharomyces cerevisiae (strain YJM789) (Baker's yeast).